We begin with the raw amino-acid sequence, 312 residues long: Methionyl-tRNA formyltransferase (312 aa).

110 to 113 (SLLP) is a binding site for (6S)-5,6,7,8-tetrahydrofolate.

The protein belongs to the Fmt family.

It catalyses the reaction L-methionyl-tRNA(fMet) + (6R)-10-formyltetrahydrofolate = N-formyl-L-methionyl-tRNA(fMet) + (6S)-5,6,7,8-tetrahydrofolate + H(+). Functionally, attaches a formyl group to the free amino group of methionyl-tRNA(fMet). The formyl group appears to play a dual role in the initiator identity of N-formylmethionyl-tRNA by promoting its recognition by IF2 and preventing the misappropriation of this tRNA by the elongation apparatus. In Streptococcus suis (strain 05ZYH33), this protein is Methionyl-tRNA formyltransferase.